The following is a 555-amino-acid chain: Beta-caryophyllene synthase (555 aa).

Mg(2+) is bound by residues Asp313, Asp317, Asp456, and Glu464. The DDXXD motif signature appears at 313-317 (DDIYD).

This sequence belongs to the terpene synthase family. Mg(2+) serves as cofactor.

The enzyme catalyses (2E,6E)-farnesyl diphosphate = (+)-(E)-beta-caryophyllene + diphosphate. It functions in the pathway secondary metabolite biosynthesis; terpenoid biosynthesis. Functionally, sesquiterpene synthase converting farnesyl diphosphate to beta-caryophyllene as the major product. This is Beta-caryophyllene synthase from Phyla dulcis (Aztec sweet herb).